The sequence spans 645 residues: Rab11 family-interacting protein 1 (645 aa).

Residues 1 to 128 enclose the C2 domain; it reads MSLAASAGRG…DQGRRKKQWY (128 aa). A compositionally biased stretch (basic and acidic residues) spans 171-187; that stretch reads PFGKLKDKIKGKNKDSA. Residues 171-215 are disordered; the sequence is PFGKLKDKIKGKNKDSASDTASAIVPSVTPSVDSDDESFSKDKKK. Residues serine 186, serine 204, serine 208, and serine 236 each carry the phosphoserine modification. Residues 259-296 form a disordered region; the sequence is WDDDAHEDESSSASDVMSHKRTSSTDQQPNQSNFSLPK. Residues 282–293 show a composition bias toward polar residues; sequence STDQQPNQSNFS. 9 positions are modified to phosphoserine: serine 301, serine 316, serine 340, serine 342, serine 344, serine 346, serine 357, serine 358, and serine 383. The interval 330–545 is disordered; the sequence is PEARSEIRES…PRPHPVKPMN (216 aa). Basic and acidic residues-rich tracts occupy residues 378–391 and 418–432; these read SDRR…KDSM and AARE…ESKK. Residue serine 434 is modified to Phosphoserine. Residues 459–487 show a composition bias toward basic and acidic residues; it reads SEKEKERKGALVEAQLREEDLMRRPEKDA. One can recognise an FIP-RBD domain in the interval 573 to 635; sequence KKYQPSDPAF…EETPNILRVP (63 aa). The necessary for interaction with RAB4A and RAB11A, subcellular location and endosomal recycling stretch occupies residues 581 to 645; the sequence is AFAYAQLTHD…AQMGKKAGKM (65 aa).

As to quaternary structure, homooligomer. Interacts with RAB11A, RAB11B, RAB25, RAB4A and RAB14.

It localises to the recycling endosome. The protein resides in the cytoplasmic vesicle. In terms of biological role, a Rab11 effector protein involved in the endosomal recycling process. Also involved in controlling membrane trafficking along the phagocytic pathway and in phagocytosis. Interaction with RAB14 may function in the process of neurite formation. The sequence is that of Rab11 family-interacting protein 1 (Rab11fip1) from Mus musculus (Mouse).